A 503-amino-acid chain; its full sequence is Cytochrome P450 3A12 (503 aa).

Cys-442 provides a ligand contact to heme.

This sequence belongs to the cytochrome P450 family. The cofactor is heme.

The protein localises to the endoplasmic reticulum membrane. It localises to the microsome membrane. It carries out the reaction an organic molecule + reduced [NADPH--hemoprotein reductase] + O2 = an alcohol + oxidized [NADPH--hemoprotein reductase] + H2O + H(+). Its function is as follows. Cytochromes P450 are a group of heme-thiolate monooxygenases. In liver microsomes, this enzyme is involved in an NADPH-dependent electron transport pathway. It oxidizes a variety of structurally unrelated compounds, including steroids, fatty acids, and xenobiotics. The protein is Cytochrome P450 3A12 (CYP3A12) of Canis lupus familiaris (Dog).